We begin with the raw amino-acid sequence, 212 residues long: Large ribosomal subunit protein uL3 (212 aa).

Glutamine 153 is subject to N5-methylglutamine.

It belongs to the universal ribosomal protein uL3 family. In terms of assembly, part of the 50S ribosomal subunit. Forms a cluster with proteins L14 and L19. In terms of processing, methylated by PrmB.

In terms of biological role, one of the primary rRNA binding proteins, it binds directly near the 3'-end of the 23S rRNA, where it nucleates assembly of the 50S subunit. The sequence is that of Large ribosomal subunit protein uL3 from Marinobacter nauticus (strain ATCC 700491 / DSM 11845 / VT8) (Marinobacter aquaeolei).